A 551-amino-acid polypeptide reads, in one-letter code: L-lactate permease (551 aa).

12 helical membrane passes run 13–33 (NIWL…FALI), 37–57 (LKGY…ALLF), 70–90 (VYGF…AVFV), 131–151 (GAAG…GLGF), 159–179 (LCLI…PILV), 194–214 (MVGR…MAIM), 244–264 (FIGP…CLTL), 366–386 (FDWF…SIVW), 405–425 (LALP…SNYS), 438–458 (TGHA…FLTG), 494–514 (VTGK…VGLV), and 530–550 (IFTC…TWMI).

The protein belongs to the lactate permease family.

It is found in the cell inner membrane. The catalysed reaction is (S)-lactate(in) + H(+)(in) = (S)-lactate(out) + H(+)(out). It catalyses the reaction (R)-lactate(in) + H(+)(in) = (R)-lactate(out) + H(+)(out). It carries out the reaction glycolate(in) + H(+)(in) = glycolate(out) + H(+)(out). In terms of biological role, uptake of L-lactate across the membrane. Can also transport D-lactate and glycolate. Seems to be driven by a proton motive force. The protein is L-lactate permease (lldP) of Escherichia coli O6:H1 (strain CFT073 / ATCC 700928 / UPEC).